We begin with the raw amino-acid sequence, 374 residues long: UDP-N-acetylglucosamine--N-acetylmuramyl-(pentapeptide) pyrophosphoryl-undecaprenol N-acetylglucosamine transferase (374 aa).

UDP-N-acetyl-alpha-D-glucosamine contacts are provided by residues 35–37, Asn-144, Arg-185, Ser-211, and Gln-305; that span reads TGG.

This sequence belongs to the glycosyltransferase 28 family. MurG subfamily.

The protein resides in the cell inner membrane. It catalyses the reaction di-trans,octa-cis-undecaprenyl diphospho-N-acetyl-alpha-D-muramoyl-L-alanyl-D-glutamyl-meso-2,6-diaminopimeloyl-D-alanyl-D-alanine + UDP-N-acetyl-alpha-D-glucosamine = di-trans,octa-cis-undecaprenyl diphospho-[N-acetyl-alpha-D-glucosaminyl-(1-&gt;4)]-N-acetyl-alpha-D-muramoyl-L-alanyl-D-glutamyl-meso-2,6-diaminopimeloyl-D-alanyl-D-alanine + UDP + H(+). Its pathway is cell wall biogenesis; peptidoglycan biosynthesis. Functionally, cell wall formation. Catalyzes the transfer of a GlcNAc subunit on undecaprenyl-pyrophosphoryl-MurNAc-pentapeptide (lipid intermediate I) to form undecaprenyl-pyrophosphoryl-MurNAc-(pentapeptide)GlcNAc (lipid intermediate II). The protein is UDP-N-acetylglucosamine--N-acetylmuramyl-(pentapeptide) pyrophosphoryl-undecaprenol N-acetylglucosamine transferase of Trichodesmium erythraeum (strain IMS101).